A 329-amino-acid polypeptide reads, in one-letter code: Sulfate-binding protein (329 aa).

The signal sequence occupies residues 1-19 (MNKWGVGLTFLLAATSVMA).

This sequence belongs to the prokaryotic sulfate-binding protein family.

The protein resides in the periplasm. In terms of biological role, this protein specifically binds sulfate and is involved in its transmembrane transport. This chain is Sulfate-binding protein (sbp), found in Escherichia coli (strain K12).